The sequence spans 281 residues: Pantothenate synthetase (281 aa).

Position 30–37 (30–37 (MGALHRGH)) interacts with ATP. Residue His37 is the Proton donor of the active site. Gln61 is a binding site for (R)-pantoate. Gln61 serves as a coordination point for beta-alanine. Position 147-150 (147-150 (GEKD)) interacts with ATP. (R)-pantoate is bound at residue Gln153. Residues Ile176 and 184-187 (LSSR) contribute to the ATP site.

The protein belongs to the pantothenate synthetase family. In terms of assembly, homodimer.

It is found in the cytoplasm. It carries out the reaction (R)-pantoate + beta-alanine + ATP = (R)-pantothenate + AMP + diphosphate + H(+). It functions in the pathway cofactor biosynthesis; (R)-pantothenate biosynthesis; (R)-pantothenate from (R)-pantoate and beta-alanine: step 1/1. Functionally, catalyzes the condensation of pantoate with beta-alanine in an ATP-dependent reaction via a pantoyl-adenylate intermediate. This Porphyromonas gingivalis (strain ATCC BAA-308 / W83) protein is Pantothenate synthetase.